The chain runs to 64 residues: Large ribosomal subunit protein bL35 (64 aa).

Residues 1 to 41 (MPKMKSHSGASKRFKVSGKGKLLRQQANRRHLLEHKPSRRT) are disordered.

Belongs to the bacterial ribosomal protein bL35 family.

The sequence is that of Large ribosomal subunit protein bL35 from Nocardia farcinica (strain IFM 10152).